A 609-amino-acid chain; its full sequence is Dihydroxy-acid dehydratase 1 (609 aa).

Position 81 (Asp-81) interacts with Mg(2+). Residue Cys-122 participates in [2Fe-2S] cluster binding. The Mg(2+) site is built by Asp-123 and Lys-124. Lys-124 is modified (N6-carboxylysine). Cys-195 lines the [2Fe-2S] cluster pocket. Position 491 (Glu-491) interacts with Mg(2+). Ser-517 serves as the catalytic Proton acceptor.

It belongs to the IlvD/Edd family. Homodimer. [2Fe-2S] cluster serves as cofactor. It depends on Mg(2+) as a cofactor.

The enzyme catalyses (2R)-2,3-dihydroxy-3-methylbutanoate = 3-methyl-2-oxobutanoate + H2O. The catalysed reaction is (2R,3R)-2,3-dihydroxy-3-methylpentanoate = (S)-3-methyl-2-oxopentanoate + H2O. It functions in the pathway amino-acid biosynthesis; L-isoleucine biosynthesis; L-isoleucine from 2-oxobutanoate: step 3/4. It participates in amino-acid biosynthesis; L-valine biosynthesis; L-valine from pyruvate: step 3/4. Functions in the biosynthesis of branched-chain amino acids. Catalyzes the dehydration of (2R,3R)-2,3-dihydroxy-3-methylpentanoate (2,3-dihydroxy-3-methylvalerate) into 2-oxo-3-methylpentanoate (2-oxo-3-methylvalerate) and of (2R)-2,3-dihydroxy-3-methylbutanoate (2,3-dihydroxyisovalerate) into 2-oxo-3-methylbutanoate (2-oxoisovalerate), the penultimate precursor to L-isoleucine and L-valine, respectively. The chain is Dihydroxy-acid dehydratase 1 from Acinetobacter baylyi (strain ATCC 33305 / BD413 / ADP1).